Consider the following 334-residue polypeptide: Glucan endo-1,3-beta-glucosidase GII (334 aa).

An N-terminal signal peptide occupies residues 1–28; that stretch reads MARKDVASMFAAALFIGAFAAVPTSVQS. Residue Glu122 is the Proton donor of the active site. Glu259 functions as the Nucleophile in the catalytic mechanism.

Belongs to the glycosyl hydrolase 17 family.

The catalysed reaction is Hydrolysis of (1-&gt;3)-beta-D-glucosidic linkages in (1-&gt;3)-beta-D-glucans.. Its function is as follows. May provide a degree of protection against microbial invasion of germinated barley grain through its ability to degrade fungal cell wall polysaccharides. Hydrolyzes laminarin in vitro. In Hordeum vulgare (Barley), this protein is Glucan endo-1,3-beta-glucosidase GII.